A 288-amino-acid polypeptide reads, in one-letter code: ATP synthase gamma chain (288 aa).

The protein belongs to the ATPase gamma chain family. F-type ATPases have 2 components, CF(1) - the catalytic core - and CF(0) - the membrane proton channel. CF(1) has five subunits: alpha(3), beta(3), gamma(1), delta(1), epsilon(1). CF(0) has three main subunits: a, b and c.

The protein localises to the cell inner membrane. In terms of biological role, produces ATP from ADP in the presence of a proton gradient across the membrane. The gamma chain is believed to be important in regulating ATPase activity and the flow of protons through the CF(0) complex. The sequence is that of ATP synthase gamma chain from Trichlorobacter lovleyi (strain ATCC BAA-1151 / DSM 17278 / SZ) (Geobacter lovleyi).